The following is a 344-amino-acid chain: Thioredoxin domain-containing protein 15 (344 aa).

The first 20 residues, 1–20 (MQLLCWWQVLLWVLGLPAHG), serve as a signal peptide directing secretion. Residues 21–305 (LEVAEDSGHP…GPLPSTLIKT (285 aa)) lie on the Extracellular side of the membrane. Disordered regions lie at residues 55–119 (DHRD…FGLQ) and 136–156 (GVTE…SLKS). Residues 88-97 (EDQRSPEAHD) are compositionally biased toward basic and acidic residues. The region spanning 163–280 (ERNVTGLENF…LKIFIFNQTG (118 aa)) is the Thioredoxin domain. N-linked (GlcNAc...) asparagine glycans are attached at residues Asn-171, Asn-178, Asn-190, and Asn-277. The helical transmembrane segment at 306 to 326 (VDWLLVFSLFFLISFIMYATI) threads the bilayer. At 327-344 (RTESIRWLIPGQEQEHAE) the chain is on the cytoplasmic side.

It is found in the cell projection. It localises to the cilium membrane. In terms of biological role, acts as a positive regulator of ciliary hedgehog signaling. Required for cilia biogenesis. This chain is Thioredoxin domain-containing protein 15 (Txndc15), found in Mus musculus (Mouse).